A 116-amino-acid chain; its full sequence is MINLIITLITNSLLSTIIIIIAFWLPQLYLYLEKSSPYECGFDPLGSARLPFSMKFFLVAITFLLFDLEIALLLPLPWAIQLPSPFTTLILSYCLIMLLTVGLAYEWIQKGLEWTE.

3 consecutive transmembrane segments (helical) span residues 4–24, 56–76, and 88–108; these read LIITLITNSLLSTIIIIIAFW, FFLVAITFLLFDLEIALLLPL, and TLILSYCLIMLLTVGLAYEWI.

It belongs to the complex I subunit 3 family. As to quaternary structure, core subunit of respiratory chain NADH dehydrogenase (Complex I) which is composed of 45 different subunits. Interacts with TMEM186. Interacts with TMEM242.

It localises to the mitochondrion inner membrane. The enzyme catalyses a ubiquinone + NADH + 5 H(+)(in) = a ubiquinol + NAD(+) + 4 H(+)(out). Core subunit of the mitochondrial membrane respiratory chain NADH dehydrogenase (Complex I) which catalyzes electron transfer from NADH through the respiratory chain, using ubiquinone as an electron acceptor. Essential for the catalytic activity of complex I. The protein is NADH-ubiquinone oxidoreductase chain 3 of Didelphis virginiana (North American opossum).